The sequence spans 32 residues: Growth hormone-related protein 4 (32 aa).

Cysteine 4 and cysteine 11 form a disulfide bridge.

Belongs to the somatotropin/prolactin family. In terms of processing, glycosylated. Placental basal zone cells.

The protein localises to the secreted. In Rattus norvegicus (Rat), this protein is Growth hormone-related protein 4.